Here is a 149-residue protein sequence, read N- to C-terminus: MTSILVLHGPNLNLLGTRQPEVYGTTTLEMVNSACIAHGQSRGLSVACLQSNHEGALVDAIHAAKGVHRGIVLNAGAYTHTSIALRDAISSVELPVVEVHLSNIHAREAFRHVSHIAPVALGQICGFGAQGYLLALDALAAHLSPEGAR.

Catalysis depends on Tyr-23, which acts as the Proton acceptor. Substrate contacts are provided by Asn-74, His-80, and Asp-87. His-100 (proton donor) is an active-site residue. Residues 101-102 (LS) and Arg-111 contribute to the substrate site.

This sequence belongs to the type-II 3-dehydroquinase family. In terms of assembly, homododecamer.

It catalyses the reaction 3-dehydroquinate = 3-dehydroshikimate + H2O. The protein operates within metabolic intermediate biosynthesis; chorismate biosynthesis; chorismate from D-erythrose 4-phosphate and phosphoenolpyruvate: step 3/7. Functionally, catalyzes a trans-dehydration via an enolate intermediate. The sequence is that of 3-dehydroquinate dehydratase from Ruegeria pomeroyi (strain ATCC 700808 / DSM 15171 / DSS-3) (Silicibacter pomeroyi).